A 329-amino-acid chain; its full sequence is MPDRVVRVAVTQAEPVWLDLQATIEKTCRLITEAASNNAQLVAFPETWIPGYPCWIWSRLVDFDLNVAYIKNSLRVDSPEMERLQACAREAGIAVSLGFSENSNNSLYISNVLIGSDGEIKVHRRKMKPTHMERTVFGDASGHCLQSVAQLPFGRVGSLSCWEHIQPLLKYNTITQNEEIHVAAWPPLNSEVGDEIPWSMTAEGCKTLSRTYAIESGTFVLHCTAVISESGINSLGTLGGALMSTPGGGHSTIFGPDGRRITDHIEETSEGIVYANLDMDELVVNKMFADCTGHYSRPDLLWLGVSQEIKPVVRPQRAEVDKGTNDQVE.

In terms of domain architecture, CN hydrolase spans 6–279; sequence VRVAVTQAEP…EGIVYANLDM (274 aa). E46 functions as the Proton acceptor in the catalytic mechanism. K126 is a catalytic residue. The Nucleophile role is filled by C161.

Belongs to the carbon-nitrogen hydrolase superfamily. Nitrilase family.

It catalyses the reaction a nitrile + 2 H2O = a carboxylate + NH4(+). The catalysed reaction is 4-chlorophenylacetonitrile + 2 H2O = 4-chlorophenylacetate + NH4(+). Its function is as follows. Nitrilase that hydrolyzes preferentially phenylacetonitrile and heteroaromatic nitriles, but has significantly lower activity for (R,S)-mandelonitrile. Also acts on dinitriles like phenylenediacetonitriles (PDAs) 1,2-PDA, 1,3-PDA, and 1,4-PDA, and cyanophenyl acetonitriles (CPAs) 2-CPA and 4-CPA. The protein is Arylacetonitrilase of Hypocrea virens (strain Gv29-8 / FGSC 10586) (Gliocladium virens).